A 316-amino-acid chain; its full sequence is tRNA dimethylallyltransferase (316 aa).

17–24 (GPTASGKT) serves as a coordination point for ATP. Residue 19–24 (TASGKT) participates in substrate binding. 4 interaction with substrate tRNA regions span residues 42-45 (DSVL), 166-170 (QRLSR), 247-252 (RCVGYR), and 280-287 (KRQITWLR).

The protein belongs to the IPP transferase family. Monomer. Mg(2+) serves as cofactor.

The catalysed reaction is adenosine(37) in tRNA + dimethylallyl diphosphate = N(6)-dimethylallyladenosine(37) in tRNA + diphosphate. Catalyzes the transfer of a dimethylallyl group onto the adenine at position 37 in tRNAs that read codons beginning with uridine, leading to the formation of N6-(dimethylallyl)adenosine (i(6)A). The sequence is that of tRNA dimethylallyltransferase from Shigella flexneri.